A 356-amino-acid chain; its full sequence is Putative aminopeptidase FrvX (356 aa).

His-61 and Asp-175 together coordinate a divalent metal cation. The active-site Proton acceptor is the Glu-205. 3 residues coordinate a divalent metal cation: Glu-206, Asp-228, and His-316.

This sequence belongs to the peptidase M42 family. The cofactor is a divalent metal cation.

The polypeptide is Putative aminopeptidase FrvX (frvX) (Escherichia coli (strain K12)).